The following is a 271-amino-acid chain: Formamidopyrimidine-DNA glycosylase (271 aa).

The active-site Schiff-base intermediate with DNA is the P2. Catalysis depends on E3, which acts as the Proton donor. Residue K58 is the Proton donor; for beta-elimination activity of the active site. The DNA site is built by H92, R111, and K152. The FPG-type zinc finger occupies 237–271; it reads YVYGKVQKPCKICNNIITLIRQNGRSTYFCNACQN. The active-site Proton donor; for delta-elimination activity is R261.

This sequence belongs to the FPG family. In terms of assembly, monomer. Zn(2+) serves as cofactor.

The catalysed reaction is Hydrolysis of DNA containing ring-opened 7-methylguanine residues, releasing 2,6-diamino-4-hydroxy-5-(N-methyl)formamidopyrimidine.. The enzyme catalyses 2'-deoxyribonucleotide-(2'-deoxyribose 5'-phosphate)-2'-deoxyribonucleotide-DNA = a 3'-end 2'-deoxyribonucleotide-(2,3-dehydro-2,3-deoxyribose 5'-phosphate)-DNA + a 5'-end 5'-phospho-2'-deoxyribonucleoside-DNA + H(+). Involved in base excision repair of DNA damaged by oxidation or by mutagenic agents. Acts as a DNA glycosylase that recognizes and removes damaged bases. Has a preference for oxidized purines, such as 7,8-dihydro-8-oxoguanine (8-oxoG). Has AP (apurinic/apyrimidinic) lyase activity and introduces nicks in the DNA strand. Cleaves the DNA backbone by beta-delta elimination to generate a single-strand break at the site of the removed base with both 3'- and 5'-phosphates. The polypeptide is Formamidopyrimidine-DNA glycosylase (Wolbachia pipientis wMel).